The primary structure comprises 805 residues: Leucine--tRNA ligase (805 aa).

The short motif at 40 to 51 is the 'HIGH' region element; sequence PYPSGSGLHVGH. Residues 576 to 580 carry the 'KMSKS' region motif; sequence KMSKS. Lysine 579 is an ATP binding site.

It belongs to the class-I aminoacyl-tRNA synthetase family.

It localises to the cytoplasm. The enzyme catalyses tRNA(Leu) + L-leucine + ATP = L-leucyl-tRNA(Leu) + AMP + diphosphate. The protein is Leucine--tRNA ligase of Chloroherpeton thalassium (strain ATCC 35110 / GB-78).